Consider the following 269-residue polypeptide: Ribosomal RNA small subunit methyltransferase A (269 aa).

Positions 20, 22, 47, 68, 90, and 110 each coordinate S-adenosyl-L-methionine.

Belongs to the class I-like SAM-binding methyltransferase superfamily. rRNA adenine N(6)-methyltransferase family. RsmA subfamily.

Its subcellular location is the cytoplasm. It catalyses the reaction adenosine(1518)/adenosine(1519) in 16S rRNA + 4 S-adenosyl-L-methionine = N(6)-dimethyladenosine(1518)/N(6)-dimethyladenosine(1519) in 16S rRNA + 4 S-adenosyl-L-homocysteine + 4 H(+). Specifically dimethylates two adjacent adenosines (A1518 and A1519) in the loop of a conserved hairpin near the 3'-end of 16S rRNA in the 30S particle. May play a critical role in biogenesis of 30S subunits. This chain is Ribosomal RNA small subunit methyltransferase A, found in Chlorobium phaeobacteroides (strain DSM 266 / SMG 266 / 2430).